We begin with the raw amino-acid sequence, 589 residues long: Aspartate--tRNA ligase (589 aa).

Glutamate 171 is an L-aspartate binding site. The interval 195–198 is aspartate; sequence QLFK. Arginine 217 is an L-aspartate binding site. ATP-binding positions include 217–219 and glutamine 226; that span reads RDE. Residue histidine 448 participates in L-aspartate binding. Glutamate 482 is a binding site for ATP. L-aspartate is bound at residue arginine 489. Residue 534–537 coordinates ATP; it reads GLDR.

Belongs to the class-II aminoacyl-tRNA synthetase family. Type 1 subfamily. Homodimer.

It localises to the cytoplasm. The catalysed reaction is tRNA(Asp) + L-aspartate + ATP = L-aspartyl-tRNA(Asp) + AMP + diphosphate. Its function is as follows. Catalyzes the attachment of L-aspartate to tRNA(Asp) in a two-step reaction: L-aspartate is first activated by ATP to form Asp-AMP and then transferred to the acceptor end of tRNA(Asp). This is Aspartate--tRNA ligase from Idiomarina loihiensis (strain ATCC BAA-735 / DSM 15497 / L2-TR).